Here is a 317-residue protein sequence, read N- to C-terminus: Acetyl-coenzyme A carboxylase carboxyl transferase subunit alpha (317 aa).

Positions 33–294 (NLDDEITRLQ…KKRLLADLAD (262 aa)) constitute a CoA carboxyltransferase C-terminal domain.

Belongs to the AccA family. In terms of assembly, acetyl-CoA carboxylase is a heterohexamer composed of biotin carboxyl carrier protein (AccB), biotin carboxylase (AccC) and two subunits each of ACCase subunit alpha (AccA) and ACCase subunit beta (AccD).

The protein resides in the cytoplasm. The enzyme catalyses N(6)-carboxybiotinyl-L-lysyl-[protein] + acetyl-CoA = N(6)-biotinyl-L-lysyl-[protein] + malonyl-CoA. It functions in the pathway lipid metabolism; malonyl-CoA biosynthesis; malonyl-CoA from acetyl-CoA: step 1/1. Component of the acetyl coenzyme A carboxylase (ACC) complex. First, biotin carboxylase catalyzes the carboxylation of biotin on its carrier protein (BCCP) and then the CO(2) group is transferred by the carboxyltransferase to acetyl-CoA to form malonyl-CoA. The protein is Acetyl-coenzyme A carboxylase carboxyl transferase subunit alpha of Histophilus somni (strain 129Pt) (Haemophilus somnus).